The chain runs to 402 residues: Metacaspase-1 (402 aa).

Positions 1–79 (MAYPGQGGHH…FAPPSGPIGP (79 aa)) are disordered. Residues 23-45 (PAPHGYAQPGYGYAPPSGPPQGY) show a composition bias toward low complexity. Catalysis depends on residues His-193 and Cys-249.

It belongs to the peptidase C14B family.

In terms of biological role, involved in cell death (apoptosis). This is Metacaspase-1 (MCA1) from Mycosarcoma maydis (Corn smut fungus).